The following is a 187-amino-acid chain: Ribosome-recycling factor (187 aa).

This sequence belongs to the RRF family.

It localises to the cytoplasm. Functionally, responsible for the release of ribosomes from messenger RNA at the termination of protein biosynthesis. May increase the efficiency of translation by recycling ribosomes from one round of translation to another. The protein is Ribosome-recycling factor of Rhodopseudomonas palustris (strain BisA53).